A 246-amino-acid polypeptide reads, in one-letter code: NAD-dependent protein deacylase (246 aa).

A Deacetylase sirtuin-type domain is found at 1–237 (MSLPYRHVVI…PRLVEEILAA (237 aa)). Residue 13-32 (GAGISAESGIQTFRAQDGLW) participates in NAD(+) binding. Substrate contacts are provided by Tyr-57 and Arg-60. 94-97 (QNID) is an NAD(+) binding site. The active-site Proton acceptor is the His-112. 2 residues coordinate Zn(2+): Cys-120 and Cys-139. NAD(+) contacts are provided by residues 179–181 (GTS), 205–207 (NLE), and Ala-223.

Belongs to the sirtuin family. Class III subfamily. The cofactor is Zn(2+).

Its subcellular location is the cytoplasm. It catalyses the reaction N(6)-acetyl-L-lysyl-[protein] + NAD(+) + H2O = 2''-O-acetyl-ADP-D-ribose + nicotinamide + L-lysyl-[protein]. It carries out the reaction N(6)-succinyl-L-lysyl-[protein] + NAD(+) + H2O = 2''-O-succinyl-ADP-D-ribose + nicotinamide + L-lysyl-[protein]. NAD-dependent lysine deacetylase and desuccinylase that specifically removes acetyl and succinyl groups on target proteins. Modulates the activities of several proteins which are inactive in their acylated form. In Vibrio cholerae serotype O1 (strain ATCC 39315 / El Tor Inaba N16961), this protein is NAD-dependent protein deacylase.